A 148-amino-acid polypeptide reads, in one-letter code: Cdc42 effector protein 5 (148 aa).

2 disordered regions span residues 1–89 and 111–148; these read MPVL…DPLL and RPEA…VIGL. Residues 23–37 form the CRIB domain; the sequence is ISAPLGDFRHTLHVG. R38 is subject to Omega-N-methylarginine. Over residues 55 to 76 the composition is skewed to pro residues; sequence GPPPEPRAPPAGAPRSPPPPAV. A compositionally biased stretch (low complexity) spans 77–87; that stretch reads PQSAAPSPADP.

The protein belongs to the BORG/CEP family. As to quaternary structure, interacts with CDC42, in a GTP-dependent manner, and with SEPT7.

It localises to the endomembrane system. The protein localises to the cytoplasm. The protein resides in the cytoskeleton. Its function is as follows. Probably involved in the organization of the actin cytoskeleton. May act downstream of CDC42 to induce actin filament assembly leading to cell shape changes. Induces pseudopodia formation in fibroblasts. Inhibits MAPK8 independently of CDC42 binding. Controls septin organization and this effect is negatively regulated by CDC42. The protein is Cdc42 effector protein 5 (CDC42EP5) of Homo sapiens (Human).